Here is a 267-residue protein sequence, read N- to C-terminus: Transcription factor LBX1 (267 aa).

A compositionally biased stretch (basic and acidic residues) spans 1 to 21 (MTSKDEAKSSASSVEERRRNA). Positions 1 to 36 (MTSKDEAKSSASSVEERRRNALDLLPPPANSNKPLT) are disordered. The homeobox DNA-binding region spans 127–186 (RRKSRTAFTNHQIYELEKRFLYQKYLSPADRDQIAQQLGLTNAQVITWFQNRRAKLKRDL). The tract at residues 211-267 (SELEESGSERGNSRSRSPQLGLTSNHMPLSPSXPLTDQHASKECSEDEEDVEIDVDD) is disordered. Residues 228 to 237 (PQLGLTSNHM) show a composition bias toward polar residues. Residues 255–267 (SEDEEDVEIDVDD) show a composition bias toward acidic residues.

As to expression, expressed in all myoblasts that will populate body wall muscles as well as in a group of cells the migrate into the head.

It localises to the nucleus. Functionally, transcription factor that controls hypaxial muscle development by down-regulating myod1 and cdkn1b/p27, thereby allowing myoblasts to proliferate before the onset of terminal differentiation. In Xenopus laevis (African clawed frog), this protein is Transcription factor LBX1.